Consider the following 64-residue polypeptide: MALPKIEDVRNLSDADLAEKIAEAKRELFDLRFQRATRQLEKPHLFKHTKHRLAQLLTVERERQ.

It belongs to the universal ribosomal protein uL29 family.

The chain is Large ribosomal subunit protein uL29 from Synechococcus elongatus (strain ATCC 33912 / PCC 7942 / FACHB-805) (Anacystis nidulans R2).